A 112-amino-acid polypeptide reads, in one-letter code: Protein lin-52 homolog (112 aa).

Belongs to the lin-52 family. As to quaternary structure, component of the DREAM complex. As to expression, expressed in the brain, liver and retina. Highly expressed in the retinal ganglion cell and inner nuclear layers at the parr stage. Expressed at a lower level in inner segments of some retinal photoreceptors.

Its function is as follows. May be involved in retinal development. This chain is Protein lin-52 homolog (lin52), found in Oncorhynchus mykiss (Rainbow trout).